A 1005-amino-acid chain; its full sequence is Myosin IE heavy chain (1005 aa).

The region spanning 8–693 is the Myosin motor domain; sequence EGVPDFVLLN…TLFYFEEKRE (686 aa). 101 to 108 provides a ligand contact to ATP; it reads GESGAGKT. The disordered stretch occupies residues 539-562; the sequence is SDPLVQGLFPPTRPEDSKKRPETA. The span at 551–560 shows a compositional bias: basic and acidic residues; the sequence is RPEDSKKRPE. Residues 556 to 630 are actin-binding; the sequence is KKRPETAGSQ…RAGFAGRIEY (75 aa). 2 IQ domains span residues 694 to 722 and 716 to 745; these read LEMPRIVTLIQKTWRGYRARSKWNQRKAA and WNQRKAAIKIQLFYRSYRYKKWFRELHRAF. The TH1 domain occupies 810 to 1004; that stretch reads KKKWDFRRHF…KGNQATIQFK (195 aa).

It belongs to the TRAFAC class myosin-kinesin ATPase superfamily. Myosin family. In terms of assembly, myosin I heavy chain is single-headed. Dimer of a heavy and a light chain. Inability to self-assemble into filaments.

In terms of biological role, myosin is a protein that binds to actin and has ATPase activity that is activated by actin. May play a role in moving membranes relative to actin. The polypeptide is Myosin IE heavy chain (myoE) (Dictyostelium discoideum (Social amoeba)).